Reading from the N-terminus, the 138-residue chain is Small ribosomal subunit protein uS12 (138 aa).

Over residues 1–22 (MPTINQLVRQGRKSISTKSDSP) the composition is skewed to polar residues. Positions 1–45 (MPTINQLVRQGRKSISTKSDSPALNFGYNSKKKSLTNNPAPQKRG) are disordered. A 3-methylthioaspartic acid modification is found at Asp-102.

This sequence belongs to the universal ribosomal protein uS12 family. As to quaternary structure, part of the 30S ribosomal subunit. Contacts proteins S8 and S17. May interact with IF1 in the 30S initiation complex.

In terms of biological role, with S4 and S5 plays an important role in translational accuracy. Its function is as follows. Interacts with and stabilizes bases of the 16S rRNA that are involved in tRNA selection in the A site and with the mRNA backbone. Located at the interface of the 30S and 50S subunits, it traverses the body of the 30S subunit contacting proteins on the other side and probably holding the rRNA structure together. The combined cluster of proteins S8, S12 and S17 appears to hold together the shoulder and platform of the 30S subunit. This chain is Small ribosomal subunit protein uS12, found in Lacticaseibacillus paracasei (strain ATCC 334 / BCRC 17002 / CCUG 31169 / CIP 107868 / KCTC 3260 / NRRL B-441) (Lactobacillus paracasei).